A 227-amino-acid chain; its full sequence is Cytochrome c oxidase subunit 2 (227 aa).

The Mitochondrial intermembrane portion of the chain corresponds to 1–14; it reads MAYPLQLGFQDATS. The chain crosses the membrane as a helical span at residues 15-45; that stretch reads PVMEELLHFHDHTLMIIFLISSLVLYIIMLM. The Mitochondrial matrix segment spans residues 46-59; the sequence is LTTKLIHTNMMNVQ. The helical transmembrane segment at 60–87 threads the bilayer; sequence EMEMIWTILPAIILILIALPSLHTLYMM. Residues 88 to 227 are Mitochondrial intermembrane-facing; it reads DEINNPLLTI…YFESWSASLA (140 aa). Positions 161, 196, 198, 200, 204, and 207 each coordinate Cu cation. Glu-198 lines the Mg(2+) pocket. Tyr-218 is modified (phosphotyrosine).

This sequence belongs to the cytochrome c oxidase subunit 2 family. As to quaternary structure, component of the cytochrome c oxidase (complex IV, CIV), a multisubunit enzyme composed of 14 subunits. The complex is composed of a catalytic core of 3 subunits MT-CO1, MT-CO2 and MT-CO3, encoded in the mitochondrial DNA, and 11 supernumerary subunits COX4I, COX5A, COX5B, COX6A, COX6B, COX6C, COX7A, COX7B, COX7C, COX8 and NDUFA4, which are encoded in the nuclear genome. The complex exists as a monomer or a dimer and forms supercomplexes (SCs) in the inner mitochondrial membrane with NADH-ubiquinone oxidoreductase (complex I, CI) and ubiquinol-cytochrome c oxidoreductase (cytochrome b-c1 complex, complex III, CIII), resulting in different assemblies (supercomplex SCI(1)III(2)IV(1) and megacomplex MCI(2)III(2)IV(2)). Found in a complex with TMEM177, COA6, COX18, COX20, SCO1 and SCO2. Interacts with TMEM177 in a COX20-dependent manner. Interacts with COX20. Interacts with COX16. The cofactor is Cu cation.

The protein resides in the mitochondrion inner membrane. It catalyses the reaction 4 Fe(II)-[cytochrome c] + O2 + 8 H(+)(in) = 4 Fe(III)-[cytochrome c] + 2 H2O + 4 H(+)(out). Functionally, component of the cytochrome c oxidase, the last enzyme in the mitochondrial electron transport chain which drives oxidative phosphorylation. The respiratory chain contains 3 multisubunit complexes succinate dehydrogenase (complex II, CII), ubiquinol-cytochrome c oxidoreductase (cytochrome b-c1 complex, complex III, CIII) and cytochrome c oxidase (complex IV, CIV), that cooperate to transfer electrons derived from NADH and succinate to molecular oxygen, creating an electrochemical gradient over the inner membrane that drives transmembrane transport and the ATP synthase. Cytochrome c oxidase is the component of the respiratory chain that catalyzes the reduction of oxygen to water. Electrons originating from reduced cytochrome c in the intermembrane space (IMS) are transferred via the dinuclear copper A center (CU(A)) of subunit 2 and heme A of subunit 1 to the active site in subunit 1, a binuclear center (BNC) formed by heme A3 and copper B (CU(B)). The BNC reduces molecular oxygen to 2 water molecules using 4 electrons from cytochrome c in the IMS and 4 protons from the mitochondrial matrix. The sequence is that of Cytochrome c oxidase subunit 2 (MT-CO2) from Elephas maximus (Indian elephant).